Reading from the N-terminus, the 302-residue chain is MATSSTLPAVVPALGGDQSLNHYLADIRKFPILKPEEEYMLAKRFQEHQDPKAASRLVTSHLRLVAKIAMGYRGYGLPVSELISEGNIGLMQGVKKFDPERGFRLATYAIWWIKASIQEYILRSWSLVKMGTTAAQKKLFFNLRRLKSNMNAFEDGDLKPDEVDSIATNLGVSNEEVVNMNRRMAMGGDSSLNITMREDGEGQMQDWLVDQEPLQDQQIEEEEESLVRHKLLIEAMDKLNDREKHILTERRLSDNPKTLEELSQVYGVSRERVRQIEVRAFDKLQKAIMELAGDRKLLPAMA.

Residues 57 to 126 are sigma-70 factor domain-2; that stretch reads LVTSHLRLVA…IQEYILRSWS (70 aa). An Interaction with polymerase core subunit RpoC motif is present at residues 81 to 84; it reads ELIS. Residues 235–286 form a sigma-70 factor domain-4 region; it reads AMDKLNDREKHILTERRLSDNPKTLEELSQVYGVSRERVRQIEVRAFDKLQK. A DNA-binding region (H-T-H motif) is located at residues 259 to 278; sequence LEELSQVYGVSRERVRQIEV.

Belongs to the sigma-70 factor family. RpoH subfamily. In terms of assembly, interacts with the RNA polymerase core enzyme.

It is found in the cytoplasm. In terms of biological role, sigma factors are initiation factors that promote the attachment of RNA polymerase to specific initiation sites and are then released. This sigma factor is involved in regulation of expression of heat shock genes. The polypeptide is RNA polymerase sigma factor RpoH (Zymomonas mobilis subsp. mobilis (strain ATCC 31821 / ZM4 / CP4)).